Here is an 818-residue protein sequence, read N- to C-terminus: MSSSSAASIGPPQPPPPPAPPEEEKKCLNSELWHACAGPLVCLPTVGTRVVYFPQGHSEQVAASTNKEVEGHIPNYPNLPAQLICQLHDVTMHADVETDEVYAQMTLQPLNPQEQNDAYLPAEMGIMSKQPTNYFCKTLTASDTSTHGGFSVPRRAAERVFPPLDFTQQPPAQELIARDIHDIEWKFRHIFRGQPKRHLLTTGWSVFVSAKRLVAGDSVLFIWNEKNQLLLGIRRASRPQTVMPSSVLSSDSMHIGLLAAAAHAAATNSRFTIFYNPRASPSEFVIPLSKYIKAVFHTRISVGMRFRMLFETEESSVRRYMGTITEVSDADPVRWPSSYWRSVKVGWDESTAGERPPRVSLWEIEPLTTFPMYPSLFPLRVKHPWYSGVASLHDDSNALMWLRGVAGEGGFQSLNFQSPGIGSWGQQRLHPSLLSSDHDQYQAVVAAAAASQSGGYLKQQFLHLQQPMQSPQEHCNLNPLLQQQILQQASQQQIINPDAQNIQTMLSPSAIQQQLQQLQQMQQVQNDQKQKIQPDQSYQVPTSAVLPSPTSLPSHLREKFGFSDPNANSSSFITSSSSDNMLDSSFLQGSSKAVDLSRFNQPVASEQQQQQQQAWKQKFMGSQSVSFGGSVLHNSPTSKDGSVENKIGRDVQNQSLFSPQVDSSSLLYNMVPNLTSNVSDGNLSTIPSGSTYLQNAMYGCLDDSSGLLQNTGENDPATRTFVKVYKSGSVGRSLDITRFSNYAELREELGQMFGIKGQLDDPDRSGWQLVFVDRENDVLLLGDDPWESFVNSVWYIKILSPEDVHKMGKQGNDPRYLS.

Residues 1-10 show a composition bias toward low complexity; the sequence is MSSSSAASIG. A disordered region spans residues 1 to 24; sequence MSSSSAASIGPPQPPPPPAPPEEE. Over residues 11–20 the composition is skewed to pro residues; that stretch reads PPQPPPPPAP. Residues 135–237 constitute a DNA-binding region (TF-B3); it reads FCKTLTASDT…QLLLGIRRAS (103 aa). 2 disordered regions span residues 526–565 and 629–648; these read NDQK…FSDP and GSVL…NKIG. Residues 629-640 show a composition bias toward polar residues; the sequence is GSVLHNSPTSKD. The PB1 domain occupies 719–803; sequence RTFVKVYKSG…WYIKILSPED (85 aa).

The protein belongs to the ARF family. Homodimers and heterodimers. As to expression, expressed in roots, culms, leaves and young panicles.

It localises to the nucleus. In terms of biological role, auxin response factors (ARFs) are transcriptional factors that bind specifically to the DNA sequence 5'-TGTCTC-3' found in the auxin-responsive promoter elements (AuxREs). The sequence is that of Auxin response factor 12 (ARF12) from Oryza sativa subsp. japonica (Rice).